The sequence spans 306 residues: MLNYVLKRLLGLIPTLLIVAVLVFLFVHLLPGDPARLIAGPEADAQVIALVRQQLGLDQPLHVQFWHYITHVLQGDFGTSMVSRRPVSEEIASRFLPTLWLTITSMIWAVLFGMAIGIAAAVWRNRWPDRVGMTLAVTGISFPAFALGMLLMQIFSVDLGWLPTVGADSWQHYILPSLTLGAAVASVMARFTRSSFVDVLSEDYMRTARAKGVSETWVVLKHGLRNAMIPVVTMMGLQFGFLLGGSIVVEKVFNWPGLGRLLVDSVDMRDYPVIQAEVLLFSLEFILINLVVDVLYAAINPAIRYK.

Residues 1-8 (MLNYVLKR) are Cytoplasmic-facing. A helical membrane pass occupies residues 9-29 (LLGLIPTLLIVAVLVFLFVHL). At 30-102 (LPGDPARLIA…SRFLPTLWLT (73 aa)) the chain is on the periplasmic side. Residues 95–292 (FLPTLWLTIT…LEFILINLVV (198 aa)) form the ABC transmembrane type-1 domain. The chain crosses the membrane as a helical span at residues 103-123 (ITSMIWAVLFGMAIGIAAAVW). The Cytoplasmic segment spans residues 124–134 (RNRWPDRVGMT). A helical transmembrane segment spans residues 135–155 (LAVTGISFPAFALGMLLMQIF). The Periplasmic segment spans residues 156–168 (SVDLGWLPTVGAD). The chain crosses the membrane as a helical span at residues 169-189 (SWQHYILPSLTLGAAVASVMA). Residues 190–228 (RFTRSSFVDVLSEDYMRTARAKGVSETWVVLKHGLRNAM) lie on the Cytoplasmic side of the membrane. Residues 229–249 (IPVVTMMGLQFGFLLGGSIVV) traverse the membrane as a helical segment. At 250–278 (EKVFNWPGLGRLLVDSVDMRDYPVIQAEV) the chain is on the periplasmic side. Residues 279-299 (LLFSLEFILINLVVDVLYAAI) traverse the membrane as a helical segment. Residues 300–306 (NPAIRYK) lie on the Cytoplasmic side of the membrane.

It belongs to the binding-protein-dependent transport system permease family. The complex is composed of two ATP-binding proteins (GsiA), two transmembrane proteins (GsiC and GsiD) and a solute-binding protein (GsiB).

Its subcellular location is the cell inner membrane. In terms of biological role, part of the ABC transporter complex GsiABCD involved in glutathione import. Probably responsible for the translocation of the substrate across the membrane. This chain is Glutathione transport system permease protein GsiC, found in Salmonella choleraesuis (strain SC-B67).